Reading from the N-terminus, the 157-residue chain is Ribosomal RNA large subunit methyltransferase H (157 aa).

S-adenosyl-L-methionine contacts are provided by residues Leu74, Gly106, and 125–130 (LGNITF).

The protein belongs to the RNA methyltransferase RlmH family. In terms of assembly, homodimer.

The protein resides in the cytoplasm. It carries out the reaction pseudouridine(1915) in 23S rRNA + S-adenosyl-L-methionine = N(3)-methylpseudouridine(1915) in 23S rRNA + S-adenosyl-L-homocysteine + H(+). In terms of biological role, specifically methylates the pseudouridine at position 1915 (m3Psi1915) in 23S rRNA. The sequence is that of Ribosomal RNA large subunit methyltransferase H from Lawsonia intracellularis (strain PHE/MN1-00).